The primary structure comprises 498 residues: Glycerol kinase (498 aa).

ADP is bound at residue Thr-11. ATP contacts are provided by Thr-11, Ser-12, and Ser-13. Thr-11 contacts sn-glycerol 3-phosphate. Residue Arg-15 coordinates ADP. Residues Arg-81, Glu-82, Tyr-133, and Asp-242 each coordinate sn-glycerol 3-phosphate. Arg-81, Glu-82, Tyr-133, Asp-242, and Gln-243 together coordinate glycerol. Positions 264 and 307 each coordinate ADP. Positions 264, 307, 311, and 408 each coordinate ATP. ADP-binding residues include Gly-408 and Asn-412.

Belongs to the FGGY kinase family.

The enzyme catalyses glycerol + ATP = sn-glycerol 3-phosphate + ADP + H(+). Its pathway is polyol metabolism; glycerol degradation via glycerol kinase pathway; sn-glycerol 3-phosphate from glycerol: step 1/1. Its activity is regulated as follows. Inhibited by fructose 1,6-bisphosphate (FBP). Its function is as follows. Key enzyme in the regulation of glycerol uptake and metabolism. Catalyzes the phosphorylation of glycerol to yield sn-glycerol 3-phosphate. The polypeptide is Glycerol kinase (Ralstonia nicotianae (strain ATCC BAA-1114 / GMI1000) (Ralstonia solanacearum)).